A 262-amino-acid polypeptide reads, in one-letter code: Zinc import ATP-binding protein ZnuC (262 aa).

The ABC transporter domain occupies 6–221 (IRLDKVAVTL…PAFVELFGKN (216 aa)). 38–45 (GPNGAGKT) is a binding site for ATP.

It belongs to the ABC transporter superfamily. Zinc importer (TC 3.A.1.15.5) family. As to quaternary structure, the complex is composed of two ATP-binding proteins (ZnuC), two transmembrane proteins (ZnuB) and a solute-binding protein (ZnuA).

The protein localises to the cell inner membrane. The catalysed reaction is Zn(2+)(out) + ATP(in) + H2O(in) = Zn(2+)(in) + ADP(in) + phosphate(in) + H(+)(in). Its function is as follows. Part of the ABC transporter complex ZnuABC involved in zinc import. Responsible for energy coupling to the transport system. The sequence is that of Zinc import ATP-binding protein ZnuC from Pseudomonas syringae pv. syringae (strain B728a).